The sequence spans 965 residues: Phosphatidylethanolamine N-methyltransferase (965 aa).

The disordered stretch occupies residues 1–55; it reads MSSSAADPFAARLNSDVRQRHPTASATSKNVEGTSQQKQQQQQQQSEANAAASRV. Residues 1 to 91 are Lumenal-facing; the sequence is MSSSAADPFA…DPREPKNLSD (91 aa). The span at 22–35 shows a compositional bias: polar residues; it reads PTASATSKNVEGTS. The segment covering 36-45 has biased composition (low complexity); the sequence is QQKQQQQQQQ. The helical transmembrane segment at 92–112 threads the bilayer; the sequence is VAVLAIIALHFLAAYYLPWGV. The Cytoplasmic portion of the chain corresponds to 113-115; it reads KRP. The helical transmembrane segment at 116–136 threads the bilayer; the sequence is LFAAIFMFWRLAYNVGIGYLL. The Lumenal portion of the chain corresponds to 137-201; that stretch reads TIQSKYKLLV…EYNTWLTFRR (65 aa). The chain crosses the membrane as a helical span at residues 202–222; sequence VVDLILMCDFISYCLFAIVCA. Topologically, residues 223 to 229 are cytoplasmic; that stretch reads HKPDGEG. The helical transmembrane segment at 230–250 threads the bilayer; that stretch reads LFMCFARWAAGITLVGFNLWV. Residues 251 to 279 lie on the Lumenal side of the membrane; sequence KLDAHRVVKDYAWYWGDFFYLIEQELTFD. Residues 280 to 300 traverse the membrane as a helical segment; that stretch reads GVFELAPHPMYSIGYAGYYGI. Over 301 to 306 the chain is Cytoplasmic; it reads SMMAAS. A helical transmembrane segment spans residues 307–327; the sequence is YDVLFISIIAHAAQFAFLVIV. The Lumenal portion of the chain corresponds to 328–389; sequence ENPHIEKTYN…IGLKNLDFFR (62 aa). Residues 390 to 410 form a helical membrane-spanning segment; it reads ITDVAIVLLCAYLAVVTMVTP. The Cytoplasmic segment spans residues 411 to 417; that stretch reads NTRFYQA. Residues 418–438 form a helical membrane-spanning segment; the sequence is LFVLHALAWRLWYSAGLGVIL. Residues 439 to 467 are Lumenal-facing; that stretch reads TMQSEEKMFTRHFLKYGESVGEAWRQWKG. Residues 468 to 488 form a helical membrane-spanning segment; that stretch reads IYHLSNCLCHASFIAASYKMY. The Cytoplasmic segment spans residues 489-496; that stretch reads EFPADWTY. Residues 497 to 517 traverse the membrane as a helical segment; it reads GWALLKHVVGLSLIALQVWTA. The Lumenal portion of the chain corresponds to 518–573; it reads TSIYESLGEFGWFYGDFFFDSKRQLTYTSIYRFLNNPERVFGTAGLWGAALITWSR. Residues 574-594 form a helical membrane-spanning segment; the sequence is AIFLMALAGHFLTLAFLAYVE. The Cytoplasmic segment spans residues 595-965; it reads KPHMQKVYGR…TTPVDSKFSE (371 aa).

This sequence belongs to the class VI-like SAM-binding methyltransferase superfamily. CHO2 family.

It is found in the endoplasmic reticulum membrane. The enzyme catalyses a 1,2-diacyl-sn-glycero-3-phosphoethanolamine + S-adenosyl-L-methionine = a 1,2-diacyl-sn-glycero-3-phospho-N-methylethanolamine + S-adenosyl-L-homocysteine + H(+). The protein operates within phospholipid metabolism; phosphatidylcholine biosynthesis. Its function is as follows. Catalyzes the first step of the methylation pathway of phosphatidylcholine biosynthesis, the SAM-dependent methylation of phosphatidylethanolamine (PE) to phosphatidylmonomethylethanolamine (PMME). In Neurospora crassa (strain ATCC 24698 / 74-OR23-1A / CBS 708.71 / DSM 1257 / FGSC 987), this protein is Phosphatidylethanolamine N-methyltransferase.